We begin with the raw amino-acid sequence, 274 residues long: Centriolar and ciliogenesis-associated protein hyls-1 (274 aa).

Disordered stretches follow at residues 156 to 188 (RSSV…SSRP) and 255 to 274 (NNED…PYID). Residues 171–183 (VGLSTETEQSELQ) show a composition bias toward polar residues. Positions 257 to 274 (EDWKANHDKDWSPRPYID) are enriched in basic and acidic residues.

This sequence belongs to the HYLS1 family. As to quaternary structure, interacts with sas-4; leading to its localization into newly forming centrioles.

It is found in the cytoplasm. The protein localises to the cytoskeleton. Its subcellular location is the microtubule organizing center. The protein resides in the centrosome. It localises to the centriole. It is found in the cell projection. The protein localises to the cilium. In terms of biological role, plays an important role in ciliogenesis. The polypeptide is Centriolar and ciliogenesis-associated protein hyls-1 (Caenorhabditis elegans).